The primary structure comprises 310 residues: HPr kinase/phosphorylase (310 aa).

Residues histidine 136 and lysine 157 contribute to the active site. An ATP-binding site is contributed by 151 to 158 (GDSGIGKS). Residue serine 158 participates in Mg(2+) binding. Aspartate 175 (proton acceptor; for phosphorylation activity. Proton donor; for dephosphorylation activity) is an active-site residue. Residues 199–208 (LEIRGLGIIN) form an important for the catalytic mechanism of both phosphorylation and dephosphorylation region. Position 200 (glutamate 200) interacts with Mg(2+). The active site involves arginine 241. The important for the catalytic mechanism of dephosphorylation stretch occupies residues 262–267 (PVRPGR).

It belongs to the HPrK/P family. Homohexamer. Requires Mg(2+) as cofactor.

The catalysed reaction is [HPr protein]-L-serine + ATP = [HPr protein]-O-phospho-L-serine + ADP + H(+). The enzyme catalyses [HPr protein]-O-phospho-L-serine + phosphate + H(+) = [HPr protein]-L-serine + diphosphate. Its function is as follows. Catalyzes the ATP- as well as the pyrophosphate-dependent phosphorylation of a specific serine residue in HPr, a phosphocarrier protein of the phosphoenolpyruvate-dependent sugar phosphotransferase system (PTS). HprK/P also catalyzes the pyrophosphate-producing, inorganic phosphate-dependent dephosphorylation (phosphorolysis) of seryl-phosphorylated HPr (P-Ser-HPr). The two antagonistic activities of HprK/P are regulated by several intracellular metabolites, which change their concentration in response to the absence or presence of rapidly metabolisable carbon sources (glucose, fructose, etc.) in the growth medium. Therefore, by controlling the phosphorylation state of HPr, HPrK/P is a sensor enzyme that plays a major role in the regulation of carbon metabolism and sugar transport: it mediates carbon catabolite repression (CCR), and regulates PTS-catalyzed carbohydrate uptake and inducer exclusion. This Staphylococcus epidermidis (strain ATCC 35984 / DSM 28319 / BCRC 17069 / CCUG 31568 / BM 3577 / RP62A) protein is HPr kinase/phosphorylase.